Consider the following 177-residue polypeptide: Large ribosomal subunit protein uL6 (177 aa).

It belongs to the universal ribosomal protein uL6 family. Part of the 50S ribosomal subunit.

In terms of biological role, this protein binds to the 23S rRNA, and is important in its secondary structure. It is located near the subunit interface in the base of the L7/L12 stalk, and near the tRNA binding site of the peptidyltransferase center. The sequence is that of Large ribosomal subunit protein uL6 from Neisseria meningitidis serogroup C (strain 053442).